The primary structure comprises 485 residues: N-succinylglutamate 5-semialdehyde dehydrogenase (485 aa).

220–225 (GSANTG) is an NAD(+) binding site. Active-site residues include Glu243 and Cys278.

This sequence belongs to the aldehyde dehydrogenase family. AstD subfamily.

The catalysed reaction is N-succinyl-L-glutamate 5-semialdehyde + NAD(+) + H2O = N-succinyl-L-glutamate + NADH + 2 H(+). It functions in the pathway amino-acid degradation; L-arginine degradation via AST pathway; L-glutamate and succinate from L-arginine: step 4/5. Functionally, catalyzes the NAD-dependent reduction of succinylglutamate semialdehyde into succinylglutamate. The sequence is that of N-succinylglutamate 5-semialdehyde dehydrogenase from Vibrio campbellii (strain ATCC BAA-1116).